The sequence spans 90 residues: Probable Fe(2+)-trafficking protein (90 aa).

This sequence belongs to the Fe(2+)-trafficking protein family.

Functionally, could be a mediator in iron transactions between iron acquisition and iron-requiring processes, such as synthesis and/or repair of Fe-S clusters in biosynthetic enzymes. This chain is Probable Fe(2+)-trafficking protein, found in Hydrogenovibrio crunogenus (strain DSM 25203 / XCL-2) (Thiomicrospira crunogena).